We begin with the raw amino-acid sequence, 131 residues long: Profilin-3 (131 aa).

Cysteines 13 and 115 form a disulfide. The short motif at 81 to 97 (AVIRGKKGAGGITIKKT) is the Involved in PIP2 interaction element. Thr111 bears the Phosphothreonine mark.

Belongs to the profilin family. As to quaternary structure, occurs in many kinds of cells as a complex with monomeric actin in a 1:1 ratio. Post-translationally, phosphorylated by MAP kinases.

It localises to the cytoplasm. The protein resides in the cytoskeleton. Its function is as follows. Binds to actin and affects the structure of the cytoskeleton. At high concentrations, profilin prevents the polymerization of actin, whereas it enhances it at low concentrations. This Olea europaea (Common olive) protein is Profilin-3.